We begin with the raw amino-acid sequence, 324 residues long: MKNVDSDDLVTGTLPKLKSSKEWLEPKPLCFMEVLAKEDTEAAIQSILYKENSVIKELDKYLQHHAFLNARRKEMLYKRWVDCVADPLQKKIIEKVCSHKKIKKRRQGELDGFLKHVNKKGNAFIEHYDPKEYDPFYMSKKDPNFLKVTIPPFHDPLKKAQYDKDNEKRTLLQCETGKIYSIKEFKEVEKVQLHSRFPQISNSRHFITPNEWLKLPTRYIESEFCRRRRLKVKVNFNDCSFDLKPLARAPYLLESQEEEKTVIYKNKGSSFLEREPLCYQEGNNPSAKEAISEGYFSSLSLSQEREEDQDGSPSPRLGLLKLEL.

This sequence belongs to the FAM228 family.

The polypeptide is Protein FAM228B (FAM228B) (Homo sapiens (Human)).